The sequence spans 474 residues: Cysteine--tRNA ligase (474 aa).

Cys-27 serves as a coordination point for Zn(2+). The 'HIGH' region motif lies at 29-39 (ITPYDHMHVGH). 3 residues coordinate Zn(2+): Cys-213, His-238, and Glu-242. A 'KMSKS' region motif is present at residues 271–275 (KMSKS). Lys-274 contacts ATP.

It belongs to the class-I aminoacyl-tRNA synthetase family. Zn(2+) serves as cofactor.

It localises to the cytoplasm. The catalysed reaction is tRNA(Cys) + L-cysteine + ATP = L-cysteinyl-tRNA(Cys) + AMP + diphosphate. The chain is Cysteine--tRNA ligase from Pyrobaculum neutrophilum (strain DSM 2338 / JCM 9278 / NBRC 100436 / V24Sta) (Thermoproteus neutrophilus).